Consider the following 565-residue polypeptide: MKSPAPSRPQKMALIPACIFLCFAALSVQAEETPVTPQPPDILLGPLFNDVQNAKLFPDQKTFADAVPNSDPLMILADYRMQQNQSGFDLRHFVNVNFTLPKEGEKYVPPEGQSLREHIDGLWPVLTRSTENTEKWDSLLPLPEPYVVPGGRFREVYYWDSYFTMLGLAESGHWDKVADMVANFAHEIDTYGHIPNGNRSYYLSRSQPPFFALMVELLAQHEGDAALKQYLPQMQKEYAYWMDGVENLQAGQQEKRVVKLQDGTLLNRYWDDRDTPRPESWVEDIATAKSNPNRPATEIYRDLRSAAASGWDFSSRWMDNPQQLNTLRTTSIVPVDLNSLMFKMEKILARASKAAGDNAMANQYETLANARQKGIEKYLWNDQQGWYADYDLKSHKVRNQLTAAALFPLYVNAAAKDRANKMATATKTHLLQPGGLNTTSVKSGQQWDAPNGWAPLQWVATEGLQNYGQKEVAMDISWHFLTNVQHTYDREKKLVEKYDVSTTGTGGGGGEYPLQDGFGWTNGVTLKMLDLICPKEQPCDNVPATRPTVKSATTQPSTKEAQPTP.

An N-terminal signal peptide occupies residues 1 to 30; sequence MKSPAPSRPQKMALIPACIFLCFAALSVQA. Substrate-binding positions include Arg152, 159–160, Asn196, 205–207, 277–279, and Gly310; these read WD, RSQ, and RPE. Catalysis depends on proton donor/acceptor residues Asp312 and Glu496. Glu511 provides a ligand contact to substrate. Residues 538–565 form a disordered region; it reads PCDNVPATRPTVKSATTQPSTKEAQPTP. Over residues 548 to 565 the composition is skewed to polar residues; the sequence is TVKSATTQPSTKEAQPTP.

The protein belongs to the glycosyl hydrolase 37 family. As to quaternary structure, monomer.

The protein localises to the periplasm. It carries out the reaction alpha,alpha-trehalose + H2O = alpha-D-glucose + beta-D-glucose. Provides the cells with the ability to utilize trehalose at high osmolarity by splitting it into glucose molecules that can subsequently be taken up by the phosphotransferase-mediated uptake system. In Escherichia coli (strain K12 / MC4100 / BW2952), this protein is Periplasmic trehalase.